Reading from the N-terminus, the 117-residue chain is Large ribosomal subunit protein bL19 (117 aa).

The protein belongs to the bacterial ribosomal protein bL19 family.

In terms of biological role, this protein is located at the 30S-50S ribosomal subunit interface and may play a role in the structure and function of the aminoacyl-tRNA binding site. This is Large ribosomal subunit protein bL19 from Vibrio vulnificus (strain CMCP6).